Reading from the N-terminus, the 505-residue chain is Glutamate--tRNA ligase (505 aa).

A 'HIGH' region motif is present at residues 16-26 (PSPTGFPHVGT). The 'KMSKS' region motif lies at 257-261 (KLSKR). Residue K260 participates in ATP binding.

Belongs to the class-I aminoacyl-tRNA synthetase family. Glutamate--tRNA ligase type 1 subfamily. As to quaternary structure, monomer.

The protein localises to the cytoplasm. It carries out the reaction tRNA(Glu) + L-glutamate + ATP = L-glutamyl-tRNA(Glu) + AMP + diphosphate. Its function is as follows. Catalyzes the attachment of glutamate to tRNA(Glu) in a two-step reaction: glutamate is first activated by ATP to form Glu-AMP and then transferred to the acceptor end of tRNA(Glu). The polypeptide is Glutamate--tRNA ligase (Psychrobacter sp. (strain PRwf-1)).